The sequence spans 130 residues: Small ribosomal subunit protein uS8 (130 aa).

The protein belongs to the universal ribosomal protein uS8 family. Part of the 30S ribosomal subunit. Contacts proteins S5 and S12.

Functionally, one of the primary rRNA binding proteins, it binds directly to 16S rRNA central domain where it helps coordinate assembly of the platform of the 30S subunit. In Sodalis glossinidius (strain morsitans), this protein is Small ribosomal subunit protein uS8.